Reading from the N-terminus, the 350-residue chain is Arabinogalactan endo-beta-1,4-galactanase A (350 aa).

Positions 1–16 (MIYPLLLSALPLLSSA) are cleaved as a signal peptide. N-linked (GlcNAc...) asparagine glycosylation is present at Asn-128. Glu-152 serves as the catalytic Proton donor. Catalysis depends on Glu-262, which acts as the Nucleophile.

This sequence belongs to the glycosyl hydrolase 53 family.

It is found in the secreted. The catalysed reaction is The enzyme specifically hydrolyzes (1-&gt;4)-beta-D-galactosidic linkages in type I arabinogalactans.. Endogalactanase involved in the degradation of plant cell wall polysaccharides, and more particularly of hairy regions of pectin. In Aspergillus niger, this protein is Arabinogalactan endo-beta-1,4-galactanase A (galA).